Consider the following 889-residue polypeptide: 97 kDa heat shock protein (889 aa).

Disordered regions lie at residues 504–622 (EDAM…ATTD) and 812–889 (FVCD…MELD). The span at 549–585 (SADKEEQADNGSKETSKDSKDQTSESSKSDKESKDQN) shows a compositional bias: basic and acidic residues. Polar residues predominate over residues 586–597 (SEGSKSDNSSTE). Positions 869-889 (ASKEGETKPDETKPDVEMELD) are enriched in basic and acidic residues.

The protein belongs to the heat shock protein 70 family.

Its function is as follows. Cell surface recognition protein that binds acrosome-reacted sperm and thereby mediates binding and subsequent fusion of the sperm and egg. The polypeptide is 97 kDa heat shock protein (Strongylocentrotus purpuratus (Purple sea urchin)).